Here is a 700-residue protein sequence, read N- to C-terminus: Transketolase (700 aa).

Histidine 45 contacts substrate. Thiamine diphosphate-binding positions include threonine 48, histidine 85, and 133-135 (GPL). Position 177 (aspartate 177) interacts with Mg(2+). Thiamine diphosphate is bound by residues glycine 178 and asparagine 207. Mg(2+) contacts are provided by asparagine 207 and isoleucine 209. Substrate-binding residues include histidine 283, arginine 378, and serine 405. Histidine 283 serves as a coordination point for thiamine diphosphate. Catalysis depends on glutamate 441, which acts as the Proton donor. A thiamine diphosphate-binding site is contributed by phenylalanine 467. Positions 491, 499, and 552 each coordinate substrate.

It belongs to the transketolase family. As to quaternary structure, homodimer. The cofactor is Mg(2+). Ca(2+) is required as a cofactor. Requires Mn(2+) as cofactor. Co(2+) serves as cofactor. It depends on thiamine diphosphate as a cofactor.

It carries out the reaction D-sedoheptulose 7-phosphate + D-glyceraldehyde 3-phosphate = aldehydo-D-ribose 5-phosphate + D-xylulose 5-phosphate. Catalyzes the transfer of a two-carbon ketol group from a ketose donor to an aldose acceptor, via a covalent intermediate with the cofactor thiamine pyrophosphate. The polypeptide is Transketolase (tkt) (Mycobacterium bovis (strain ATCC BAA-935 / AF2122/97)).